The chain runs to 301 residues: Cytosolic sulfotransferase 3 (301 aa).

A 3'-phosphoadenylyl sulfate-binding site is contributed by 53-58; it reads KAGTTW. The active-site Proton acceptor is His115. Residues Arg137, Ser145, Tyr201, 235-240, and 263-265 each bind 3'-phosphoadenylyl sulfate; these read VQFDAM and RKG.

This sequence belongs to the sulfotransferase 1 family.

The protein resides in the cytoplasm. Inhibited by Hg(2+), Co(2+), Zn(2+), Cd(2+), Cu(2+) and Pb(2+) ions. Activated slightly by Mn(2+), Ca(2+) and Mg(2+) ions. Its function is as follows. Sulfotransferase that utilizes 3'-phospho-5'-adenylyl sulfate (PAPS) as sulfonate donor to catalyze the sulfate conjugation of a variety of xenobiotic and endogenous compounds, including dopamine, T3 (triiodo-L-thyronine), T4 (thyroxine), estrone, DHEA (dehydroepiandrosterone), flavonoids, isoflavonoids and other phenolic compounds. The polypeptide is Cytosolic sulfotransferase 3 (Danio rerio (Zebrafish)).